Consider the following 255-residue polypeptide: Syntaxin-6 (255 aa).

Position 2 is an N-acetylserine (S2). S2 bears the Phosphoserine mark. Residues 2–168 (SMEDPFFVVK…QAQQQLIVEQ (167 aa)) form a required for interaction with VPS51 region. Residues 2–234 (SMEDPFFVVK…VSHMTSDRRQ (233 aa)) lie on the Cytoplasmic side of the membrane. The stretch at 41 to 74 (EEIDWTTNELRNNLRSIEWDLEDLDETISIVEAN) forms a coiled coil. A phosphoserine mark is found at S129 and S152. The t-SNARE coiled-coil homology domain maps to 163–225 (QLIVEQQDEQ…DNVMKKLAKV (63 aa)). Residues 235–255 (WCAIAILFAVLLVVLILFLVL) traverse the membrane as a helical; Anchor for type IV membrane protein segment.

This sequence belongs to the syntaxin family. In terms of assembly, identified in a complex containing STX6, STX12, VAMP4 and VTI1A. Binds EEA1. Interacts with VPS45A. Interacts with MARCHF2; the interaction promotes MARCHF2-mediated ubiquitination and degradation of CFTR. Interacts with MARCHF3. Interacts with GOPC. Interacts with BLTP3B (via C-terminal coiled-coil domain). Interacts with BAIAP3; this interaction is increased in the presence of calcium. Interacts with VPS13B.

The protein resides in the golgi apparatus membrane. It localises to the golgi apparatus. The protein localises to the trans-Golgi network membrane. It is found in the recycling endosome membrane. Its function is as follows. SNARE promoting movement of transport vesicles to target membranes. Targets endosomes to the trans-Golgi network, and may therefore function in retrograde trafficking. Together with SNARE STX12, promotes movement of vesicles from endosomes to the cell membrane, and may therefore function in the endocytic recycling pathway. The polypeptide is Syntaxin-6 (STX6) (Homo sapiens (Human)).